The following is a 696-amino-acid chain: HIPL2 protein (696 aa).

The signal sequence occupies residues methionine 1–serine 24. Asparagine 38, asparagine 69, asparagine 74, asparagine 108, asparagine 124, asparagine 148, asparagine 175, asparagine 339, asparagine 431, asparagine 513, asparagine 519, asparagine 528, asparagine 581, and asparagine 651 each carry an N-linked (GlcNAc...) asparagine glycan. Serine 672 is lipidated: GPI-anchor amidated serine. The propeptide at serine 673–aspartate 696 is removed in mature form.

This sequence belongs to the PQQ oxidoreductase GdhB family. The cofactor is pyrroloquinoline quinone.

It is found in the cell membrane. In Arabidopsis thaliana (Mouse-ear cress), this protein is HIPL2 protein (HIPL2).